The chain runs to 884 residues: E3 SUMO-protein ligase SIZ1 (884 aa).

The SAP domain occupies 11–45; sequence LSYFRIKELKDVLTQLGLSKQGKKQELVDRILTLL. Positions 84-103 are disordered; the sequence is LASKGQVSSDTSNLKVKGEP. Polar residues predominate over residues 88–97; sequence GQVSSDTSNL. A Glycyl lysine isopeptide (Lys-Gly) (interchain with G-Cter in SUMO) cross-link involves residue Lys100. The segment at 112–168 adopts a PHD-type zinc-finger fold; the sequence is KVRCVCGNSLETDSMIQCEDPRCHVWQHVGCVILPDKPMDGNPPLPESFYCEICRLT. The SP-RING-type zinc finger occupies 346–429; it reads SDSDIEVVAD…FNRITSKMKH (84 aa). Positions 379, 381, 402, and 405 each coordinate Zn(2+). A Glycyl lysine isopeptide (Lys-Gly) (interchain with G-Cter in SUMO) cross-link involves residue Lys488. Disordered regions lie at residues 753–778, 792–824, and 836–869; these read PSLQ…ADMS, GDSA…MDTT, and DSRQ…QTRH. Composition is skewed to polar residues over residues 766–778 and 803–824; these read SAQS…ADMS and ATTN…MDTT. A compositionally biased stretch (basic and acidic residues) spans 837-847; sequence SRQDKAKKQRS.

It belongs to the PIAS family. In terms of assembly, interacts (via PHD domain) with SCE1, GTE3 and GTE5. Post-translationally, autosumoylated at Lys-100 and Lys-488. Ubiquitous.

The protein resides in the nucleus speckle. Its pathway is protein modification; protein sumoylation. In terms of biological role, E3 SUMO protein ligase involved in regulation processes. Mediates SUMO/ attachment to PHR1, a MYB transcriptional activator controlling the phosphate deficiency responses. Functions as an upstream negative regulator of salicylic acid (SA) accumulation and subsequent SA-mediated systemic acquired resistance (SAR) signaling. Probably not involved in jasmonic acid (JA)-mediated defense response. Participates in abiotic stress-induced sumoylation. Controls heat shock-induced SUMO1 and SUMO2 conjugation and facilitates basal thermotolerance. Involved in freezing tolerance by mediating sumoylation of ICE1, a transcription activator of the cold signaling regulator CBF3/DREB1A. Acts as a positive regulator of drought stress tolerance. Acts as a floral repressor that promotes FLC expression by repressing FLD activity through sumoylation. Acts as a negative regulator of abscisic acid (ABA) signaling through ABI5 sumoylation. Mediates sumoylation of SCE1, GTE3 and GTE5. Functions as a negative regulator of SnRK1 signaling through sumoylation of several components of the SnRK1 complex. This Arabidopsis thaliana (Mouse-ear cress) protein is E3 SUMO-protein ligase SIZ1.